A 271-amino-acid polypeptide reads, in one-letter code: uncharacterized protein (271 aa).

The N-terminal stretch at 1–22 is a signal peptide; sequence MARELLFLACAIVIADSWPAKA.

This is an uncharacterized protein from Sinorhizobium fredii (strain NBRC 101917 / NGR234).